Here is a 360-residue protein sequence, read N- to C-terminus: Photosystem II protein D1 1 (360 aa).

3 consecutive transmembrane segments (helical) span residues 29 to 46 (YVGW…TAAI), 118 to 133 (HFLI…QWEL), and 142 to 156 (WIPV…AATA). H118 provides a ligand contact to chlorophyll a. Position 126 (Y126) interacts with pheophytin a. Residues D170 and E189 each contribute to the [CaMn4O5] cluster site. The chain crosses the membrane as a helical span at residues 197-218 (FHMIGVAGVFGGALFSAMHGSL). H198 is a binding site for chlorophyll a. Residues H215 and 264-265 (SF) contribute to the a quinone site. H215 serves as a coordination point for Fe cation. Residue H272 participates in Fe cation binding. A helical membrane pass occupies residues 274-288 (FLAAWPVIGIWFAAL). [CaMn4O5] cluster-binding residues include H332, E333, D342, and A344. The propeptide occupies 345–360 (SGEVQPIALAAPAIAS).

The protein belongs to the reaction center PufL/M/PsbA/D family. In terms of assembly, PSII is composed of 1 copy each of membrane proteins PsbA, PsbB, PsbC, PsbD, PsbE, PsbF, PsbH, PsbI, PsbJ, PsbK, PsbL, PsbM, PsbT, PsbX, PsbY, PsbZ, Psb30/Ycf12, peripheral proteins PsbO, CyanoQ (PsbQ), PsbU, PsbV and a large number of cofactors. It forms dimeric complexes. The D1/D2 heterodimer binds P680, chlorophylls that are the primary electron donor of PSII, and subsequent electron acceptors. It shares a non-heme iron and each subunit binds pheophytin, quinone, additional chlorophylls, carotenoids and lipids. D1 provides most of the ligands for the Mn4-Ca-O5 cluster of the oxygen-evolving complex (OEC). There is also a Cl(-1) ion associated with D1 and D2, which is required for oxygen evolution. The PSII complex binds additional chlorophylls, carotenoids and specific lipids. is required as a cofactor. In terms of processing, tyr-161 forms a radical intermediate that is referred to as redox-active TyrZ, YZ or Y-Z. Post-translationally, C-terminally processed by CtpA; processing is essential to allow assembly of the oxygen-evolving complex and thus photosynthetic growth.

It localises to the cellular thylakoid membrane. The catalysed reaction is 2 a plastoquinone + 4 hnu + 2 H2O = 2 a plastoquinol + O2. In terms of biological role, photosystem II (PSII) is a light-driven water:plastoquinone oxidoreductase that uses light energy to abstract electrons from H(2)O, generating O(2) and a proton gradient subsequently used for ATP formation. It consists of a core antenna complex that captures photons, and an electron transfer chain that converts photonic excitation into a charge separation. The D1/D2 (PsbA/PsbD) reaction center heterodimer binds P680, the primary electron donor of PSII as well as several subsequent electron acceptors. In Trichormus variabilis (strain ATCC 29413 / PCC 7937) (Anabaena variabilis), this protein is Photosystem II protein D1 1.